The primary structure comprises 662 residues: Glycogen debranching enzyme (662 aa).

Asp338 (nucleophile) is an active-site residue. Glu373 acts as the Proton donor in catalysis.

It belongs to the glycosyl hydrolase 13 family.

It catalyses the reaction Hydrolysis of (1-&gt;6)-alpha-D-glucosidic linkages to branches with degrees of polymerization of three or four glucose residues in limit dextrin.. It participates in glycan degradation; glycogen degradation. Removes maltotriose and maltotetraose chains that are attached by 1,6-alpha-linkage to the limit dextrin main chain, generating a debranched limit dextrin. This Yersinia enterocolitica serotype O:8 / biotype 1B (strain NCTC 13174 / 8081) protein is Glycogen debranching enzyme.